Reading from the N-terminus, the 1240-residue chain is Neurofascin (1240 aa).

An N-terminal signal peptide occupies residues 1 to 24 (MARQQAPPWVHIALILFLLSLGGA). The Extracellular portion of the chain corresponds to 25–1110 (IEIPMDPSIQ…NQADIATQGW (1086 aa)). 6 Ig-like C2-type domains span residues 41 to 137 (PTIT…LQVS), 143 to 230 (PKEN…NPFT), 244 to 332 (PSFM…ISVR), 337 to 424 (PYWL…AFVS), 430 to 517 (PRML…VRLE), and 521 to 603 (PTRI…QDLA). 4 disulfide bridges follow: Cys-63–Cys-118, Cys-162–Cys-213, Cys-268–Cys-316, and Cys-358–Cys-408. A glycan (N-linked (GlcNAc...) asparagine) is linked at Asn-305. N-linked (GlcNAc...) asparagine glycosylation is found at Asn-409 and Asn-446. Intrachain disulfides connect Cys-452-Cys-501 and Cys-543-Cys-592. Residue Tyr-481 is modified to Phosphotyrosine. Residue Asn-483 is glycosylated (N-linked (GlcNAc...) asparagine). Ser-485 carries the phosphoserine modification. 4 consecutive Fibronectin type-III domains span residues 630 to 725 (RPRD…TSGA), 727 to 823 (PESN…SGED), 827 to 923 (APRR…PNEA), and 1007 to 1099 (APDE…TAYT). The disordered stretch occupies residues 710–740 (SSHPSLPSERYRTSGAPPESNPSDVKGEGTR). Residues Asn-752, Asn-778, Asn-866, and Asn-881 are each glycosylated (N-linked (GlcNAc...) asparagine). The interval 902 to 942 (ARTQVGSGEAATEESPAPPNEATPTAAPPTLPPTTVGTTGL) is disordered. A compositionally biased stretch (low complexity) spans 907-916 (GSGEAATEES). The segment covering 917 to 933 (PAPPNEATPTAAPPTLP) has biased composition (pro residues). Residues 1111–1131 (FIGLMCAIALLVLILLIVCFI) form a helical membrane-spanning segment. Residues 1132 to 1240 (KRSRGGKYPV…SPVNAIYSLA (109 aa)) are Cytoplasmic-facing. The tract at residues 1141–1240 (VREKKDVPLG…SPVNAIYSLA (100 aa)) is disordered. A compositionally biased stretch (acidic residues) spans 1154–1165 (PKEEDGSFDYSD). 7 positions are modified to phosphoserine: Ser-1160, Ser-1174, Ser-1187, Ser-1190, Ser-1226, Ser-1227, and Ser-1231. Positions 1171 to 1184 (LQGSQTSLDGTIKQ) are enriched in polar residues.

This sequence belongs to the immunoglobulin superfamily. L1/neurofascin/NgCAM family. In terms of assembly, horseshoe-shaped homodimer. Probable constituent of a NFASC/NRCAM/ankyrin-G complex. Associates with the sodium channel beta-1 (SCN1B) and beta-3 (SCN3B) subunits. Interacts with GLDN/gliomedin. Interacts with MYOC.

The protein localises to the cell membrane. In terms of biological role, cell adhesion, ankyrin-binding protein which may be involved in neurite extension, axonal guidance, synaptogenesis, myelination and neuron-glial cell interactions. The polypeptide is Neurofascin (Nfasc) (Mus musculus (Mouse)).